The sequence spans 119 residues: Large ribosomal subunit protein bL20 (119 aa).

Belongs to the bacterial ribosomal protein bL20 family.

In terms of biological role, binds directly to 23S ribosomal RNA and is necessary for the in vitro assembly process of the 50S ribosomal subunit. It is not involved in the protein synthesizing functions of that subunit. The protein is Large ribosomal subunit protein bL20 of Bradyrhizobium sp. (strain ORS 278).